A 289-amino-acid chain; its full sequence is Ribosomal protein L11 methyltransferase (289 aa).

Residues Thr135, Gly156, Asp179, and Asn225 each contribute to the S-adenosyl-L-methionine site.

Belongs to the methyltransferase superfamily. PrmA family.

It is found in the cytoplasm. It catalyses the reaction L-lysyl-[protein] + 3 S-adenosyl-L-methionine = N(6),N(6),N(6)-trimethyl-L-lysyl-[protein] + 3 S-adenosyl-L-homocysteine + 3 H(+). In terms of biological role, methylates ribosomal protein L11. This chain is Ribosomal protein L11 methyltransferase, found in Chlorobaculum tepidum (strain ATCC 49652 / DSM 12025 / NBRC 103806 / TLS) (Chlorobium tepidum).